Here is a 35-residue protein sequence, read N- to C-terminus: Photosystem II reaction center protein T (35 aa).

Residues 3-23 (ALVYTFLLVSTLGIIFFAIFF) form a helical membrane-spanning segment.

The protein belongs to the PsbT family. In terms of assembly, PSII is composed of 1 copy each of membrane proteins PsbA, PsbB, PsbC, PsbD, PsbE, PsbF, PsbH, PsbI, PsbJ, PsbK, PsbL, PsbM, PsbT, PsbY, PsbZ, Psb30/Ycf12, at least 3 peripheral proteins of the oxygen-evolving complex and a large number of cofactors. It forms dimeric complexes.

Its subcellular location is the plastid. The protein localises to the chloroplast thylakoid membrane. Its function is as follows. Found at the monomer-monomer interface of the photosystem II (PS II) dimer, plays a role in assembly and dimerization of PSII. PSII is a light-driven water plastoquinone oxidoreductase, using light energy to abstract electrons from H(2)O, generating a proton gradient subsequently used for ATP formation. This Stewartia pseudocamellia (Japanese stewartia) protein is Photosystem II reaction center protein T.